Consider the following 496-residue polypeptide: NADP-dependent glyceraldehyde-3-phosphate dehydrogenase (496 aa).

Ala2 is subject to N-acetylalanine. At Thr4 the chain carries Phosphothreonine. Substrate is bound by residues Arg116 and 169–170 (NY). Residues Lys192, Thr195, and Asp230 each contribute to the NADP(+) site. An NAD(+)-binding site is contributed by 245–249 (GGDTG). Glu264 functions as the Proton acceptor in the catalytic mechanism. 297–299 (RCT) is a substrate binding site. The active-site Nucleophile is Cys298. NADP(+) is bound at residue Glu391. Arg451 is a binding site for substrate.

Belongs to the aldehyde dehydrogenase family.

It localises to the cytoplasm. The catalysed reaction is D-glyceraldehyde 3-phosphate + NADP(+) + H2O = (2R)-3-phosphoglycerate + NADPH + 2 H(+). Its function is as follows. Important as a means of generating NADPH for biosynthetic reactions. The sequence is that of NADP-dependent glyceraldehyde-3-phosphate dehydrogenase (ALDH11A3) from Arabidopsis thaliana (Mouse-ear cress).